A 293-amino-acid polypeptide reads, in one-letter code: DNA-directed RNA polymerase III subunit rpc6 (293 aa).

It belongs to the eukaryotic RPC34/RPC39 RNA polymerase subunit family. In terms of assembly, component of the RNA polymerase III (Pol III) complex.

It localises to the nucleus. In terms of biological role, DNA-dependent RNA polymerase catalyzes the transcription of DNA into RNA using the four ribonucleoside triphosphates as substrates. Specific peripheric component of RNA polymerase III which synthesizes small RNAs, such as 5S rRNA and tRNAs. May direct RNA Pol III binding to the TFIIIB-DNA complex. The chain is DNA-directed RNA polymerase III subunit rpc6 (polr3f) from Dictyostelium discoideum (Social amoeba).